The following is a 29-amino-acid chain: Cytochrome b6-f complex subunit 8 (29 aa).

The helical transmembrane segment at 3–23 (IVSIAWAALMVVFTFSLSLVV) threads the bilayer.

The protein belongs to the PetN family. In terms of assembly, the 4 large subunits of the cytochrome b6-f complex are cytochrome b6, subunit IV (17 kDa polypeptide, PetD), cytochrome f and the Rieske protein, while the 4 small subunits are PetG, PetL, PetM and PetN. The complex functions as a dimer.

It localises to the plastid. The protein resides in the chloroplast thylakoid membrane. Its function is as follows. Component of the cytochrome b6-f complex, which mediates electron transfer between photosystem II (PSII) and photosystem I (PSI), cyclic electron flow around PSI, and state transitions. The protein is Cytochrome b6-f complex subunit 8 of Angiopteris evecta (Mule's foot fern).